The sequence spans 438 residues: MIRKHSLGFVASALALAVSAQAFAGTVTTDGADIVIKTKGGLEVATTDKEFSFKLGGRLQADYSRFDGFYTKNGNTADAAYFRRAFIELGGTAYKDWKYQINFDLSHNTGSSDNGYFDEASVTYTGFNPVNLKFGRFDPDFGLEKATSSKWVTAPERNAAYELADWINTHQDGMGAQVNSTLADMAYLSAGVSAKDADDSDGDSVKQFNFRGVFAPMHEAGNVLHVGVNYAYRDLDDTAFDSRIRPRLGMRGIATSGGNDAGDNGNRATFGGVSNSPAGSYKDDSVWGLEGAWAMGPFSAQAEYLARKLKADDNAYKDIKAKGYYAQLAYTLTGESRQYKLEGAKFDSVKPENKEIGAWEVFYRYDNIKVEDDNVVADTATREVGDTKAKAHNLGVNWYVNDAVKISAAYVKAKTDKITNNNGDDDGDGFVTRLQYVF.

An N-terminal signal peptide occupies residues 1–24 (MIRKHSLGFVASALALAVSAQAFA).

This sequence belongs to the OprO/OprP family.

It localises to the cell outer membrane. Functionally, anion specific, the binding site has higher affinity for phosphate than chloride ions. Porin O has a higher affinity for polyphosphates (tripolyphosphate and pyrophosphate) while porin P has a higher affinity for orthophosphate. The chain is Porin O (oprO) from Pseudomonas aeruginosa (strain ATCC 15692 / DSM 22644 / CIP 104116 / JCM 14847 / LMG 12228 / 1C / PRS 101 / PAO1).